We begin with the raw amino-acid sequence, 99 residues long: A-type ATP synthase subunit F (99 aa).

Belongs to the V-ATPase F subunit family. Has multiple subunits with at least A(3), B(3), C, D, E, F, H, I and proteolipid K(x).

It localises to the cell membrane. In terms of biological role, component of the A-type ATP synthase that produces ATP from ADP in the presence of a proton gradient across the membrane. This chain is A-type ATP synthase subunit F, found in Methanococcus maripaludis (strain C7 / ATCC BAA-1331).